The primary structure comprises 119 residues: Protein phosphatase EYA3 (119 aa).

The protein belongs to the HAD-like hydrolase superfamily. EYA family. Mg(2+) serves as cofactor.

The protein resides in the cytoplasm. It is found in the nucleus. The catalysed reaction is O-phospho-L-tyrosyl-[protein] + H2O = L-tyrosyl-[protein] + phosphate. Its function is as follows. Tyrosine phosphatase that specifically dephosphorylates 'Tyr-142' of histone H2AX (H2AXY142ph). 'Tyr-142' phosphorylation of histone H2AX plays a central role in DNA repair and acts as a mark that distinguishes between apoptotic and repair responses to genotoxic stress. Promotes efficient DNA repair by dephosphorylating H2AX, promoting the recruitment of DNA repair complexes containing MDC1. Its function as histone phosphatase probably explains its role in transcription regulation during organogenesis. May be involved in development of the eye. This Gallus gallus (Chicken) protein is Protein phosphatase EYA3 (EYA3).